The following is a 321-amino-acid chain: Solute carrier family 25 member 33 (321 aa).

Solcar repeat units lie at residues 9 to 118 (ENTL…AKEQ), 126 to 213 (NSNI…LKKY), and 231 to 315 (TSFF…IVYL). The next 6 helical transmembrane spans lie at 12-32 (LLHLFAGGCGGTVGAIFTCPL), 49-65 (VYYPQVHLGTISGAGMV), 121-141 (GIFVPNSNIVHIFSAGSAAFI), 190-210 (LTASYAGISETIICFAIYESL), 233-253 (FFGLMAAAALSKGCASCIAYP), and 298-318 (QIPNTAIVLSTYELIVYLLED).

Belongs to the mitochondrial carrier (TC 2.A.29) family. Expressed in the central nervous system. Also expressed in testis and skeletal muscle. Weakly expressed in heart, liver, kidney, prostate, colon and peripheral blood leukocytes.

Its subcellular location is the mitochondrion inner membrane. The enzyme catalyses UTP(in) + UDP(out) = UTP(out) + UDP(in). It carries out the reaction dUTP(out) + UTP(in) = dUTP(in) + UTP(out). The catalysed reaction is 5-methyl-UTP(out) + UTP(in) = 5-methyl-UTP(in) + UTP(out). It catalyses the reaction 5-methyl-UDP(out) + UTP(in) = 5-methyl-UDP(in) + UTP(out). The enzyme catalyses UTP(in) + CTP(out) = UTP(out) + CTP(in). It carries out the reaction CDP(out) + UTP(in) = CDP(in) + UTP(out). The catalysed reaction is dCTP(out) + UTP(in) = dCTP(in) + UTP(out). It catalyses the reaction dCDP(out) + UTP(in) = dCDP(in) + UTP(out). The enzyme catalyses UTP(in) + GTP(out) = UTP(out) + GTP(in). It carries out the reaction UTP(in) + GDP(out) = UTP(out) + GDP(in). The catalysed reaction is dGTP(out) + UTP(in) = dGTP(in) + UTP(out). It catalyses the reaction dGDP(out) + UTP(in) = dGDP(in) + UTP(out). The enzyme catalyses ITP(out) + UTP(in) = ITP(in) + UTP(out). Its activity is regulated as follows. Inhibited by pyridoxal 5'-phosphate, 4,7-diphenyl-1,10-phenanthroline, tannic acid, and mercurials (mercury dichloride, mersalyl acid, p-hydroxymercuribenzoate). Mitochondrial transporter that imports/exports pyrimidine nucleotides into and from mitochondria. Selectively transports uridine, thymidine, guanosine, cytosine and inosine (deoxy)nucleoside di- and triphosphates by an antiport mechanism. May import (deoxy)nucleoside triphosphates in exchange for intramitochondrial (deoxy)nucleoside diphosphates, thus providing precursors necessary for de novo synthesis of mitochondrial DNA and RNA while exporting products of their catabolism. Participates in mitochondrial genome maintenance, regulation of mitochondrial membrane potential and mitochondrial respiration. Upon INS or IGF1 stimulation regulates cell growth and proliferation by controlling mitochondrial DNA replication and transcription, the ratio of mitochondria-to nuclear-encoded components of the electron transport chain resulting in control of mitochondrial ROS production. Participates in dendritic cell endocytosis and may associate with mitochondrial oxidative phosphorylation. The sequence is that of Solute carrier family 25 member 33 (SLC25A33) from Homo sapiens (Human).